The chain runs to 61 residues: Photosystem II reaction center protein K (61 aa).

A propeptide spanning residues 1–24 (MLNIFNLICICFNSALFSSSFLFA) is cleaved from the precursor. The chain crosses the membrane as a helical span at residues 36–56 (IVDFMPVIPVLFFLLAFVWQA).

The protein belongs to the PsbK family. PSII is composed of 1 copy each of membrane proteins PsbA, PsbB, PsbC, PsbD, PsbE, PsbF, PsbH, PsbI, PsbJ, PsbK, PsbL, PsbM, PsbT, PsbX, PsbY, PsbZ, Psb30/Ycf12, at least 3 peripheral proteins of the oxygen-evolving complex and a large number of cofactors. It forms dimeric complexes.

Its subcellular location is the plastid. The protein resides in the chloroplast thylakoid membrane. Its function is as follows. One of the components of the core complex of photosystem II (PSII). PSII is a light-driven water:plastoquinone oxidoreductase that uses light energy to abstract electrons from H(2)O, generating O(2) and a proton gradient subsequently used for ATP formation. It consists of a core antenna complex that captures photons, and an electron transfer chain that converts photonic excitation into a charge separation. The polypeptide is Photosystem II reaction center protein K (Gossypium barbadense (Sea Island cotton)).